The chain runs to 430 residues: Probable transporter SCO4007 (430 aa).

Positions 1-17 (MPSSPSSTTPAPTSTPA) are enriched in low complexity. Positions 1–26 (MPSSPSSTTPAPTSTPAARREPSGKG) are disordered. 11 helical membrane passes run 34-54 (LFLP…YLAA), 70-90 (AVAW…LFFA), 101-121 (LVAA…ASAG), 126-146 (AGAV…VPLV), 159-179 (VAAV…LGGL), 188-208 (AVFV…AYIL), 244-264 (AGMY…LTEG), 275-295 (GLFG…GGLV), 315-335 (VPLF…AVLV), 362-382 (TAYV…AGPA), and 383-403 (FGHW…VLGW).

This sequence belongs to the major facilitator superfamily.

The protein resides in the cell membrane. In Streptomyces coelicolor (strain ATCC BAA-471 / A3(2) / M145), this protein is Probable transporter SCO4007.